The following is a 590-amino-acid chain: UvrABC system protein C (590 aa).

A GIY-YIG domain is found at 14–91; the sequence is EQPGCYLMKD…IKKHDPKYNV (78 aa). In terms of domain architecture, UVR spans 196-231; the sequence is EDVKRELAEKMHEAAETLEFERAKEYRDQIAAIEMT.

Belongs to the UvrC family. In terms of assembly, interacts with UvrB in an incision complex.

It localises to the cytoplasm. The UvrABC repair system catalyzes the recognition and processing of DNA lesions. UvrC both incises the 5' and 3' sides of the lesion. The N-terminal half is responsible for the 3' incision and the C-terminal half is responsible for the 5' incision. The chain is UvrABC system protein C from Geobacillus kaustophilus (strain HTA426).